The primary structure comprises 253 residues: Imidazole glycerol phosphate synthase subunit HisF (253 aa).

Catalysis depends on residues Asp-12 and Asp-131.

This sequence belongs to the HisA/HisF family. Heterodimer of HisH and HisF.

The protein localises to the cytoplasm. The enzyme catalyses 5-[(5-phospho-1-deoxy-D-ribulos-1-ylimino)methylamino]-1-(5-phospho-beta-D-ribosyl)imidazole-4-carboxamide + L-glutamine = D-erythro-1-(imidazol-4-yl)glycerol 3-phosphate + 5-amino-1-(5-phospho-beta-D-ribosyl)imidazole-4-carboxamide + L-glutamate + H(+). It participates in amino-acid biosynthesis; L-histidine biosynthesis; L-histidine from 5-phospho-alpha-D-ribose 1-diphosphate: step 5/9. Its function is as follows. IGPS catalyzes the conversion of PRFAR and glutamine to IGP, AICAR and glutamate. The HisF subunit catalyzes the cyclization activity that produces IGP and AICAR from PRFAR using the ammonia provided by the HisH subunit. The polypeptide is Imidazole glycerol phosphate synthase subunit HisF (Corynebacterium urealyticum (strain ATCC 43042 / DSM 7109)).